The chain runs to 66 residues: Alpha-bisabolene synthase (66 aa).

This sequence belongs to the terpene synthase family. Tpsd subfamily. Mn(2+) serves as cofactor. Requires K(+) as cofactor.

It localises to the cytoplasm. The catalysed reaction is (2E,6E)-farnesyl diphosphate = (E,R)-alpha-bisabolene + diphosphate. The protein operates within terpene metabolism; oleoresin biosynthesis. In terms of biological role, involved in defensive oleoresin formation in conifers in response to insect attack or other injury. Involved in sesquiterpene (C15) olefins biosynthesis. The protein is Alpha-bisabolene synthase of Pseudotsuga menziesii (Douglas-fir).